Consider the following 319-residue polypeptide: ATP-dependent 6-phosphofructokinase (319 aa).

Gly-11 is a binding site for ATP. An ADP-binding site is contributed by 21-25 (RAVVR). ATP is bound by residues 72-73 (RC) and 102-105 (GDGS). Position 103 (Asp-103) interacts with Mg(2+). 125–127 (TID) contributes to the substrate binding site. Residue Asp-127 is the Proton acceptor of the active site. Residue Arg-154 participates in ADP binding. Substrate contacts are provided by residues Arg-162 and 169-171 (MGR). ADP contacts are provided by residues 185 to 187 (GAE), Arg-211, and 213 to 215 (KLH). Residues Glu-222, Arg-243, and 249-252 (HLQR) each bind substrate.

Belongs to the phosphofructokinase type A (PFKA) family. ATP-dependent PFK group I subfamily. Prokaryotic clade 'B1' sub-subfamily. As to quaternary structure, homotetramer. Mg(2+) serves as cofactor.

Its subcellular location is the cytoplasm. The catalysed reaction is beta-D-fructose 6-phosphate + ATP = beta-D-fructose 1,6-bisphosphate + ADP + H(+). It participates in carbohydrate degradation; glycolysis; D-glyceraldehyde 3-phosphate and glycerone phosphate from D-glucose: step 3/4. Its activity is regulated as follows. Allosterically activated by ADP and other diphosphonucleosides, and allosterically inhibited by phosphoenolpyruvate. Its function is as follows. Catalyzes the phosphorylation of D-fructose 6-phosphate to fructose 1,6-bisphosphate by ATP, the first committing step of glycolysis. The chain is ATP-dependent 6-phosphofructokinase from Clostridium novyi (strain NT).